Reading from the N-terminus, the 480-residue chain is UDP-N-acetylmuramate--L-alanine ligase (480 aa).

127-133 lines the ATP pocket; the sequence is GTHGKTT.

Belongs to the MurCDEF family.

It is found in the cytoplasm. The catalysed reaction is UDP-N-acetyl-alpha-D-muramate + L-alanine + ATP = UDP-N-acetyl-alpha-D-muramoyl-L-alanine + ADP + phosphate + H(+). It functions in the pathway cell wall biogenesis; peptidoglycan biosynthesis. In terms of biological role, cell wall formation. In Blochmanniella floridana, this protein is UDP-N-acetylmuramate--L-alanine ligase.